A 287-amino-acid polypeptide reads, in one-letter code: Bifunctional protein FolD (287 aa).

Residues 160-162 (GRS), Ser189, and Thr230 each bind NADP(+).

It belongs to the tetrahydrofolate dehydrogenase/cyclohydrolase family. In terms of assembly, homodimer.

It carries out the reaction (6R)-5,10-methylene-5,6,7,8-tetrahydrofolate + NADP(+) = (6R)-5,10-methenyltetrahydrofolate + NADPH. The enzyme catalyses (6R)-5,10-methenyltetrahydrofolate + H2O = (6R)-10-formyltetrahydrofolate + H(+). Its pathway is one-carbon metabolism; tetrahydrofolate interconversion. Functionally, catalyzes the oxidation of 5,10-methylenetetrahydrofolate to 5,10-methenyltetrahydrofolate and then the hydrolysis of 5,10-methenyltetrahydrofolate to 10-formyltetrahydrofolate. This chain is Bifunctional protein FolD, found in Chlamydia abortus (strain DSM 27085 / S26/3) (Chlamydophila abortus).